The chain runs to 168 residues: uncharacterized protein (168 aa).

Transmembrane regions (helical) follow at residues 41 to 61 (LLPW…LFFI) and 133 to 153 (KFVI…FFVL).

It localises to the cell membrane. This is an uncharacterized protein from Thermotoga maritima (strain ATCC 43589 / DSM 3109 / JCM 10099 / NBRC 100826 / MSB8).